The sequence spans 148 residues: MFDVTLLILLGLAALGFISHNTTVAVSILVLIIVRVTPLSTFFPWIEKQGLSIGIIILTIGIMAPIASGTLPPSTLIHSFLNWKSLVAIAVGVIVSWLGGRGVTLMGSQPQLVAGLLVGTVLGVALFRGVPVGPLIAAGLVSLIVGKQ.

4 helical membrane passes run 14–34 (ALGFISHNTTVAVSILVLIIV), 51–71 (LSIGIIILTIGIMAPIASGTL), 86–106 (LVAIAVGVIVSWLGGRGVTLM), and 121–141 (VLGVALFRGVPVGPLIAAGLV).

Belongs to the UPF0756 family.

The protein resides in the cell membrane. This Escherichia coli O127:H6 (strain E2348/69 / EPEC) protein is UPF0756 membrane protein YeaL.